The chain runs to 245 residues: Uridylate kinase (245 aa).

12–15 is an ATP binding site; that stretch reads KLSG. An involved in allosteric activation by GTP region spans residues 20–25; it reads GEKGVG. G54 is a binding site for UMP. G55 and R59 together coordinate ATP. Residues D74 and 135 to 142 each bind UMP; that span reads IGSPYFST. N163, Y169, and D172 together coordinate ATP.

The protein belongs to the UMP kinase family. As to quaternary structure, homohexamer.

The protein localises to the cytoplasm. It carries out the reaction UMP + ATP = UDP + ADP. It participates in pyrimidine metabolism; CTP biosynthesis via de novo pathway; UDP from UMP (UMPK route): step 1/1. With respect to regulation, allosterically activated by GTP. Inhibited by UTP. Catalyzes the reversible phosphorylation of UMP to UDP. This Streptococcus thermophilus (strain ATCC BAA-250 / LMG 18311) protein is Uridylate kinase.